Here is a 453-residue protein sequence, read N- to C-terminus: MSRHTDLVRSFLEQLEARDYREGAILAREFSDIKARSVAWKSEGVCSTKAGSRLGNTNKNRYKDVVAYDETRVILSLLQEEGHGDYINANFIRGIDGSQAYIATQGPLPHTLLDFWRLVWEFGVKVILMACQETENGRRKCERYWAREQEPLKAGPFCITLTKETTLNADITLRTLQVTFQKEFRSVHQLQYMSWPDHGVPSSSDHILTMVEEARCLQGLGPGPLCVHCSAGCGRTGVLCAVDYVRQLLLTQTIPPNFSLFQVVLEMRKQRPAAVQTEEQYRFLYHTVAQLFSRTLQDTSPHYQNLKENCAPICKEAFSLRTSSALPATSRPPGGVLRSISVPAPPTLPMADTYAVVQKRGASAGTGPGPRAPTSTDTPIYSQVAPRAQRPVAHTEDAQGTTALRRVPADQNSSGPDAYEEVTDGAQTGGLGFNLRIGRPKGPRDPPAEWTRV.

In terms of domain architecture, Tyrosine-protein phosphatase spans 26–291 (LAREFSDIKA…RFLYHTVAQL (266 aa)). Residues aspartate 197, 229–235 (CSAGCGR), and glutamine 276 each bind substrate. Cysteine 229 acts as the Phosphocysteine intermediate in catalysis. Residues tyrosine 381 and tyrosine 419 each carry the phosphotyrosine modification. Residues 384–453 (VAPRAQRPVA…RDPPAEWTRV (70 aa)) form a disordered region. Residues 442 to 453 (GPRDPPAEWTRV) show a composition bias toward basic and acidic residues.

It belongs to the protein-tyrosine phosphatase family. Non-receptor class 4 subfamily. In terms of assembly, interacts with PSTPIP1. Highest expression in bone marrow. Also expressed in kidney, lung, ovary, spleen, thymus and lymph node.

It is found in the nucleus. It localises to the cytoplasm. The catalysed reaction is O-phospho-L-tyrosyl-[protein] + H2O = L-tyrosyl-[protein] + phosphate. Its function is as follows. May be involved in growth and differentiation of hematopoietic cells. This is Tyrosine-protein phosphatase non-receptor type 18 (Ptpn18) from Mus musculus (Mouse).